Reading from the N-terminus, the 357-residue chain is Probable protein phosphatase 2C 60 (357 aa).

In terms of domain architecture, PPM-type phosphatase spans 23–329 (RYGLSSMQGW…DNMTMILVRF (307 aa)). Positions 57, 58, 272, and 320 each coordinate Mn(2+). The interval 331 to 357 (NPTPSETELKPEASQAEGNHDEPSSSN) is disordered. Positions 348-357 (GNHDEPSSSN) are enriched in basic and acidic residues.

The protein belongs to the PP2C family. Requires Mg(2+) as cofactor. Mn(2+) serves as cofactor.

The catalysed reaction is O-phospho-L-seryl-[protein] + H2O = L-seryl-[protein] + phosphate. The enzyme catalyses O-phospho-L-threonyl-[protein] + H2O = L-threonyl-[protein] + phosphate. The protein is Probable protein phosphatase 2C 60 of Arabidopsis thaliana (Mouse-ear cress).